Here is a 977-residue protein sequence, read N- to C-terminus: Ubiquitin-like modifier-activating enzyme 7 (977 aa).

The protein belongs to the ubiquitin-activating E1 family. Ubiquitinated by RNF170.

The protein resides in the cytoplasm. It is found in the nucleus. The protein operates within protein modification; protein ubiquitination. Functionally, E1-activating enzyme that catalyzes the covalent conjugation of the ubiquitin-like protein product of ISG15 to additional interferons stimulated proteins (ISGs) as well as other cellular proteins such as P53 in a process termed protein ISGylation. Plays an essential role in antiviral immunity together with ISG15 by restricting the replication of many viruses including rabies virus, influenza virus, sindbis virus or rotavirus. The chain is Ubiquitin-like modifier-activating enzyme 7 from Mus musculus (Mouse).